A 678-amino-acid chain; its full sequence is Protein mono-ADP-ribosyltransferase PARP15 (678 aa).

Over residues 1 to 19 (MAAPGPLPAAALSPGAPTP) the composition is skewed to low complexity. Residues 1 to 67 (MAAPGPLPAA…SSRSMSRDNK (67 aa)) form a disordered region. A compositionally biased stretch (basic residues) spans 49-58 (GARKASRRSS). Macro domains are found at residues 78 to 267 (NVVA…TNWS) and 293 to 464 (CFTA…KKRD). Residues 312–313 (DI), 324–325 (ST), arginine 331, valine 335, 409–413 (GTGNA), and glutamine 449 contribute to the substrate site. Residues 482-678 (LPEHWTDMNH…YPEYLITFTA (197 aa)) enclose the PARP catalytic domain.

This sequence belongs to the ARTD/PARP family.

The protein resides in the nucleus. It carries out the reaction L-aspartyl-[protein] + NAD(+) = 4-O-(ADP-D-ribosyl)-L-aspartyl-[protein] + nicotinamide. The enzyme catalyses L-glutamyl-[protein] + NAD(+) = 5-O-(ADP-D-ribosyl)-L-glutamyl-[protein] + nicotinamide. In terms of biological role, mono-ADP-ribosyltransferase that mediates mono-ADP-ribosylation of target proteins. Acts as a negative regulator of transcription. The protein is Protein mono-ADP-ribosyltransferase PARP15 of Homo sapiens (Human).